A 344-amino-acid chain; its full sequence is UDP-3-O-acylglucosamine N-acyltransferase (344 aa).

His-248 functions as the Proton acceptor in the catalytic mechanism.

The protein belongs to the transferase hexapeptide repeat family. LpxD subfamily. In terms of assembly, homotrimer.

It catalyses the reaction a UDP-3-O-[(3R)-3-hydroxyacyl]-alpha-D-glucosamine + a (3R)-hydroxyacyl-[ACP] = a UDP-2-N,3-O-bis[(3R)-3-hydroxyacyl]-alpha-D-glucosamine + holo-[ACP] + H(+). Its pathway is bacterial outer membrane biogenesis; LPS lipid A biosynthesis. Functionally, catalyzes the N-acylation of UDP-3-O-acylglucosamine using 3-hydroxyacyl-ACP as the acyl donor. Is involved in the biosynthesis of lipid A, a phosphorylated glycolipid that anchors the lipopolysaccharide to the outer membrane of the cell. In Prochlorococcus marinus (strain MIT 9312), this protein is UDP-3-O-acylglucosamine N-acyltransferase.